The sequence spans 85 residues: UPF0386 protein Plav_1374 (85 aa).

The protein belongs to the UPF0386 family.

In Parvibaculum lavamentivorans (strain DS-1 / DSM 13023 / NCIMB 13966), this protein is UPF0386 protein Plav_1374.